The chain runs to 293 residues: Acetyl-coenzyme A carboxylase carboxyl transferase subunit beta (293 aa).

A CoA carboxyltransferase N-terminal domain is found at 29-293 (LWVKCSECSQ…GVKELAEANT (265 aa)). Zn(2+) is bound by residues Cys33, Cys36, Cys52, and Cys55. The segment at 33–55 (CSECSQVAYRKDLISNFNVCSNC) adopts a C4-type zinc-finger fold.

Belongs to the AccD/PCCB family. In terms of assembly, acetyl-CoA carboxylase is a heterohexamer composed of biotin carboxyl carrier protein (AccB), biotin carboxylase (AccC) and two subunits each of ACCase subunit alpha (AccA) and ACCase subunit beta (AccD). Requires Zn(2+) as cofactor.

Its subcellular location is the cytoplasm. It carries out the reaction N(6)-carboxybiotinyl-L-lysyl-[protein] + acetyl-CoA = N(6)-biotinyl-L-lysyl-[protein] + malonyl-CoA. It functions in the pathway lipid metabolism; malonyl-CoA biosynthesis; malonyl-CoA from acetyl-CoA: step 1/1. Its function is as follows. Component of the acetyl coenzyme A carboxylase (ACC) complex. Biotin carboxylase (BC) catalyzes the carboxylation of biotin on its carrier protein (BCCP) and then the CO(2) group is transferred by the transcarboxylase to acetyl-CoA to form malonyl-CoA. The protein is Acetyl-coenzyme A carboxylase carboxyl transferase subunit beta of Prochlorococcus marinus (strain MIT 9301).